The primary structure comprises 131 residues: Small ribosomal subunit protein uS9 (131 aa).

The protein belongs to the universal ribosomal protein uS9 family.

The sequence is that of Small ribosomal subunit protein uS9 from Glaesserella parasuis serovar 5 (strain SH0165) (Haemophilus parasuis).